A 318-amino-acid polypeptide reads, in one-letter code: Energy-coupling factor transporter ATP-binding protein EcfA2 (318 aa).

An ABC transporter domain is found at 22 to 271 (LRAQGLKCVF…PEIMQTTSIA (250 aa)). 59–66 (GNSGSGKS) contributes to the ATP binding site.

It belongs to the ABC transporter superfamily. Energy-coupling factor EcfA family. As to quaternary structure, forms a stable energy-coupling factor (ECF) transporter complex composed of 2 membrane-embedded substrate-binding proteins (S component), 2 ATP-binding proteins (A component) and 2 transmembrane proteins (T component).

Its subcellular location is the cell membrane. Its function is as follows. ATP-binding (A) component of a common energy-coupling factor (ECF) ABC-transporter complex. Unlike classic ABC transporters this ECF transporter provides the energy necessary to transport a number of different substrates. This Mycoplasmoides gallisepticum (strain R(low / passage 15 / clone 2)) (Mycoplasma gallisepticum) protein is Energy-coupling factor transporter ATP-binding protein EcfA2.